The sequence spans 218 residues: Pyrrolidone-carboxylate peptidase 2 (218 aa).

Catalysis depends on residues E83, C146, and H170.

This sequence belongs to the peptidase C15 family. In terms of assembly, homotetramer.

It is found in the cytoplasm. The catalysed reaction is Release of an N-terminal pyroglutamyl group from a polypeptide, the second amino acid generally not being Pro.. Its function is as follows. Removes 5-oxoproline from various penultimate amino acid residues except L-proline. This is Pyrrolidone-carboxylate peptidase 2 from Photorhabdus laumondii subsp. laumondii (strain DSM 15139 / CIP 105565 / TT01) (Photorhabdus luminescens subsp. laumondii).